Reading from the N-terminus, the 882-residue chain is MVPFKLTNKVPTDTGPSLISAQSVPRPIVFMDNRNNTRIVTPTLPPNQHRGISGASTALPWSPESKNTGKYIWNRVKLKNSPFPRYRHSSSFIVTNDNRIFVTGGLHDQSVYGDVWQIAANADGTSFTSKRIDIDQNTPPPRVGHASTICGNAYVVFGGDTHKLNKNGLLDDDLYLFNINSYKWTIPQPIGRRPLGRYGHKISIIASNPMQTKLYLFGGQVDETYFNDLVVFDLSSFRRPNSHWEFLEPVGDLPPPLTNHTMVAYDNKLWVFGGETPKTISNDTYRYDPAQSEWSKVKTTGEKPPPIQEHASVVYKHLMCVLGGKDTHNAYSNDVYFLNLLSLKWYKLPRMKEGIPQERSGHSLTLMKNEKLLIMGGDKTDYASPNIHDLQTSETDQGEGTLLYTLDLSSLNELCPGIMCESLHAGESFSNSLSGGFTPSKSTESENQEIINILTPRLPDSKVLSYNDIDEGAGSYSSALDDKAFERKSDREEKKPQSSKVDSSINKESPGTGIKVSKKNFPVLRGLTVDSEEYGSSSYKDTSCQKGIPKNLFDDLNLNLQTLRLEAQQKELETARHISQLEKEVQRLMVIKEASKDSNFQTARLKNLEIQKTFLESRINDLKNLLMVKLSQASKLCDQITIQNNGLKTCSEHVTIKRDIIDLENKCDVLKRQNEILVNNMQKITPELHTYLNESSCYLGKLLKSYPTSARPPSSEKDNQIYEKDSLNKIEKVINEMHETVRAKEKLHLETQKLNDERDSLRANLLDNNNKLDALRKLSDGSSKSMDLTKKAIHLSQSELEKYRKNNDDLQKEIDRIKTEQAEQDDKQEQRGAITHGNFDAFHRMKINNLKAELYMSKENRDSLKDELLALKKKLYTLEQKK.

Residues 41–60 form a disordered region; it reads TPTLPPNQHRGISGASTALP. Kelch repeat units lie at residues 99 to 143, 153 to 207, 213 to 267, 268 to 317, 319 to 369, and 371 to 417; these read RIFV…PPRV, AYVV…IIAS, KLYL…AYDN, KLWV…VYKH, MCVL…LMKN, and KLLI…LCPG. At Thr-455 the chain carries Phosphothreonine. A compositionally biased stretch (basic and acidic residues) spans 480–496; that stretch reads LDDKAFERKSDREEKKP. Residues 480-516 are disordered; that stretch reads LDDKAFERKSDREEKKPQSSKVDSSINKESPGTGIKV. Over residues 498–509 the composition is skewed to polar residues; it reads SSKVDSSINKES. Ser-509 bears the Phosphoserine mark. 2 coiled-coil regions span residues 550-685 and 728-881; these read KNLF…QKIT and NKIE…LEQK.

In terms of assembly, interacts with KEL1.

The sequence is that of Kelch repeat-containing protein 2 (KEL2) from Saccharomyces cerevisiae (strain ATCC 204508 / S288c) (Baker's yeast).